The primary structure comprises 189 residues: Ion-translocating oxidoreductase complex subunit B (189 aa).

The hydrophobic stretch occupies residues 1–26; the sequence is MSQVIIAIILLGLLALAFGALLGYAA. Residues 32-90 enclose the 4Fe-4S domain; sequence EGDPIIDQAEALLPQTQCGQCGYPGCRPYAEAIANGEKINKCPPGGTATMEKLAELMGV. Residues Cys-49, Cys-52, Cys-57, Cys-73, Cys-114, Cys-117, Cys-120, Cys-124, Cys-144, Cys-147, Cys-150, and Cys-154 each contribute to the [4Fe-4S] cluster site. 4Fe-4S ferredoxin-type domains lie at 105–134 and 135–164; these read KVAF…GTGK and QMHT…MIPV.

It belongs to the 4Fe4S bacterial-type ferredoxin family. RnfB subfamily. In terms of assembly, the complex is composed of six subunits: RnfA, RnfB, RnfC, RnfD, RnfE and RnfG. Requires [4Fe-4S] cluster as cofactor.

The protein resides in the cell inner membrane. In terms of biological role, part of a membrane-bound complex that couples electron transfer with translocation of ions across the membrane. This is Ion-translocating oxidoreductase complex subunit B from Shewanella loihica (strain ATCC BAA-1088 / PV-4).